The sequence spans 487 residues: MTTAAIIGGGVIGGGWAARFLLNGWDVRVFDPDPEAERKIGEVLANARRSLPGLSDMPLPPEGKLSFHADLGEAVTGAAWIQESVPERLDLKLKVYRSIQEACDPGAILGSSTSGFKPSELQEGALRPGQIVVTHPFNPVYLLPLIELVTTPENSPEMIERAKEIMRGLGQFPLHVRKEIDAHIADRFLEAVWREALWLVKDGIATTEEIDEAIRMGFGIRWAQMGLFETYRVAGGEAGMKHFMAQFGPCLSWPWTKLMDVPEFTDELVDLIAGQSDAQSGHHTIRELERIRDNNLVGMMRALKAQNWGAGAVLNKHDAALKPKALPDLDTADLTQPILTLSRAVPLDWTDYNGHMTESKYLEAFANSTDRFMEIIGCDADYIAAGGSYFTAETHIRHLDEAHAGARIRVETQMLLGQGKKLHLFHRMYEGDKLLATGESFLLHVSLETRKPCAPSPEIEAAMARIAEAQAGLSYPEGAGSAIRKPA.

Positions 1-327 (MTTAAIIGGG…DAALKPKALP (327 aa)) are L-carnitine dehydrogenase. Position 8 to 13 (8 to 13 (GGGVIG)) interacts with NAD(+). The tract at residues 328-487 (DLDTADLTQP…GAGSAIRKPA (160 aa)) is betainyl-CoA thioesterase.

This sequence in the N-terminal section; belongs to the 3-hydroxyacyl-CoA dehydrogenase family. L-carnitine dehydrogenase subfamily. In the C-terminal section; belongs to the betainyl-CoA thioesterase family. In terms of assembly, homodimer.

It localises to the cytoplasm. It catalyses the reaction carnitine + NAD(+) = 3-dehydrocarnitine + NADH + H(+). The catalysed reaction is N,N,N-trimethylglycyl-CoA + H2O = glycine betaine + CoA + H(+). It participates in amine and polyamine metabolism; carnitine metabolism. Multifunctional enzyme that catalyzes the NAD(+)-dependent oxidation of L-carnitine to 3-dehydrocarnitine and the cleavage of betainyl-CoA (N,N,N-trimethylglycyl-CoA) into glycine betaine and coenzyme A. This chain is L-carnitine dehydrogenase/betainyl-CoA thioesterase, found in Ruegeria pomeroyi (strain ATCC 700808 / DSM 15171 / DSS-3) (Silicibacter pomeroyi).